We begin with the raw amino-acid sequence, 299 residues long: Homeobox protein ceh-24 (299 aa).

A compositionally biased stretch (basic and acidic residues) spans 1-35 (MSEKETPSPVLDVKKEKNEETGIDEEKSSEDDCSK). Disordered stretches follow at residues 1–45 (MSEK…NPSK) and 208–263 (QEKE…SGVF). The segment at residues 150–209 (RRKRRVLFSQAQVYELERRFKQAKYLTAPEREQLANSIRLTPTQVKIWFQNHRYKCKRQE) is a DNA-binding region (homeobox). Over residues 242–252 (DDKDDEEEEES) the composition is skewed to acidic residues.

Belongs to the NK-2 homeobox family. Expressed in the 8 vulval muscles, 8-10 ventral neurons in the head and in the most posterior pharyngeal muscle cell, m8. Expressed in SIA, SIB and SMB sublateral motor neurons, and in muscles of the pharynx and vulva.

It localises to the nucleus. Probable transcriptional regulator that is required in neural development for the normal formation of sublateral cholinergic motor neuron processes. Plays a role in regulating the expression of acetylcholine transporter protein unc-17 in the sublateral processes. In particular, it is required in sublateral motor neurons for a left-right turning behavior that occurs during the lethargus phase of the normal sleep process called 'flipping'. During 'flipping' animals rotate 180 degrees about their longitudinal axis. This Caenorhabditis elegans protein is Homeobox protein ceh-24.